Reading from the N-terminus, the 750-residue chain is Photosystem I P700 chlorophyll a apoprotein A1 (750 aa).

The next 8 membrane-spanning stretches (helical) occupy residues 70–93 (VFSA…FHGA), 156–179 (LYCT…FHYH), 195–219 (LNHH…HVSL), 291–309 (IAHH…GHMY), 346–369 (WHAQ…HHMY), 385–411 (LSLF…IFMV), 433–455 (AIIS…LYIH), and 531–549 (FLVH…LILL). 2 residues coordinate [4Fe-4S] cluster: C573 and C582. Helical transmembrane passes span 589–610 (HVFL…HFSW) and 664–686 (LSAY…MFLF). H675 lines the chlorophyll a' pocket. M683 and Y691 together coordinate chlorophyll a. W692 provides a ligand contact to phylloquinone. The helical transmembrane segment at 724–744 (AVGVTHYLLGGIATTWAFFLA) threads the bilayer.

Belongs to the PsaA/PsaB family. In terms of assembly, the PsaA/B heterodimer binds the P700 chlorophyll special pair and subsequent electron acceptors. PSI consists of a core antenna complex that captures photons, and an electron transfer chain that converts photonic excitation into a charge separation. The eukaryotic PSI reaction center is composed of at least 11 subunits. The cofactor is P700 is a chlorophyll a/chlorophyll a' dimer, A0 is one or more chlorophyll a, A1 is one or both phylloquinones and FX is a shared 4Fe-4S iron-sulfur center..

It is found in the plastid. The protein localises to the chloroplast thylakoid membrane. The enzyme catalyses reduced [plastocyanin] + hnu + oxidized [2Fe-2S]-[ferredoxin] = oxidized [plastocyanin] + reduced [2Fe-2S]-[ferredoxin]. In terms of biological role, psaA and PsaB bind P700, the primary electron donor of photosystem I (PSI), as well as the electron acceptors A0, A1 and FX. PSI is a plastocyanin-ferredoxin oxidoreductase, converting photonic excitation into a charge separation, which transfers an electron from the donor P700 chlorophyll pair to the spectroscopically characterized acceptors A0, A1, FX, FA and FB in turn. Oxidized P700 is reduced on the lumenal side of the thylakoid membrane by plastocyanin. The protein is Photosystem I P700 chlorophyll a apoprotein A1 of Nasturtium officinale (Watercress).